Here is a 648-residue protein sequence, read N- to C-terminus: Macrolide export ATP-binding/permease protein MacB (648 aa).

The ABC transporter domain maps to 5-243; the sequence is LELCNVSRSY…QGVDAAVVNT (239 aa). 41–48 lines the ATP pocket; sequence GVSGSGKS. Transmembrane regions (helical) follow at residues 273 to 293, 417 to 437, 523 to 543, 577 to 597, and 611 to 631; these read LLTM…VVVG, ANVV…IGVA, LFLT…VMNI, VLVC…IAFM, and LTAL…FGWL.

It belongs to the ABC transporter superfamily. Macrolide exporter (TC 3.A.1.122) family. Homodimer. Part of the tripartite efflux system MacAB-TolC, which is composed of an inner membrane transporter, MacB, a periplasmic membrane fusion protein, MacA, and an outer membrane component, TolC. The complex forms a large protein conduit and can translocate molecules across both the inner and outer membranes. Interacts with MacA.

The protein localises to the cell inner membrane. Part of the tripartite efflux system MacAB-TolC. MacB is a non-canonical ABC transporter that contains transmembrane domains (TMD), which form a pore in the inner membrane, and an ATP-binding domain (NBD), which is responsible for energy generation. Confers resistance against macrolides. This Salmonella typhimurium (strain LT2 / SGSC1412 / ATCC 700720) protein is Macrolide export ATP-binding/permease protein MacB.